The sequence spans 933 residues: Probable Rho-type GTPase-activating protein 4 (933 aa).

2 LIM zinc-binding domains span residues 22 to 80 and 81 to 129; these read CFCI…LCVD and ICNG…CLPC. Disordered regions lie at residues 181–200 and 304–338; these read PSSV…NSLR and ENGT…STTT. Polar residues predominate over residues 325-338; sequence RSSTMNYKSVSTTT. S353 is modified (phosphoserine). Disordered stretches follow at residues 415 to 435, 605 to 628, and 641 to 660; these read RLSS…NYEA, SSSF…SPRE, and GFRP…KRNS. Residues 619–628 are compositionally biased toward polar residues; sequence RTISTPSPRE. S625 bears the Phosphoserine mark. Residues 643–652 are compositionally biased toward basic and acidic residues; sequence RPKDNKDKES. A phosphoserine mark is found at S738 and S740. The 180-residue stretch at 753 to 932 folds into the Rho-GAP domain; the sequence is NRLTLLRVPT…FLIDHVHEVF (180 aa).

Its function is as follows. GTPase-activating protein for Rho-type proteins. The sequence is that of Probable Rho-type GTPase-activating protein 4 (rga4) from Schizosaccharomyces pombe (strain 972 / ATCC 24843) (Fission yeast).